The primary structure comprises 542 residues: CTP synthase (542 aa).

An amidoligase domain region spans residues 1–265 (MARYVFITGG…DNEVLAAFGI (265 aa)). Residue Ser-13 participates in CTP binding. Ser-13 provides a ligand contact to UTP. ATP contacts are provided by residues 14–19 (SLGKGI) and Asp-71. Mg(2+) is bound by residues Asp-71 and Glu-139. CTP contacts are provided by residues 146–148 (DIE), 186–191 (KTKPTQ), and Lys-222. UTP-binding positions include 186–191 (KTKPTQ) and Lys-222. The Glutamine amidotransferase type-1 domain maps to 291–541 (TIAIVGKYTG…IEAALEQSRL (251 aa)). Gly-353 is an L-glutamine binding site. Catalysis depends on Cys-380, which acts as the Nucleophile; for glutamine hydrolysis. Residues 381-384 (FGMQ), Glu-404, and Arg-469 contribute to the L-glutamine site. Active-site residues include His-514 and Glu-516.

Belongs to the CTP synthase family. As to quaternary structure, homotetramer.

It catalyses the reaction UTP + L-glutamine + ATP + H2O = CTP + L-glutamate + ADP + phosphate + 2 H(+). The catalysed reaction is L-glutamine + H2O = L-glutamate + NH4(+). The enzyme catalyses UTP + NH4(+) + ATP = CTP + ADP + phosphate + 2 H(+). It participates in pyrimidine metabolism; CTP biosynthesis via de novo pathway; CTP from UDP: step 2/2. With respect to regulation, allosterically activated by GTP, when glutamine is the substrate; GTP has no effect on the reaction when ammonia is the substrate. The allosteric effector GTP functions by stabilizing the protein conformation that binds the tetrahedral intermediate(s) formed during glutamine hydrolysis. Inhibited by the product CTP, via allosteric rather than competitive inhibition. Catalyzes the ATP-dependent amination of UTP to CTP with either L-glutamine or ammonia as the source of nitrogen. Regulates intracellular CTP levels through interactions with the four ribonucleotide triphosphates. The sequence is that of CTP synthase from Sinorhizobium medicae (strain WSM419) (Ensifer medicae).